The chain runs to 265 residues: MKFIIEALKRVRERRPLVHNITNFVVMNTTANALLALGASPVMAHAEEELEEMIRLADAVVINIGTLDSGWRRSMVKATEIANELGKPIVLDPVGAGATKFRTRVSLEILSRGVDVLKGNFGEISALLGEEGKTRGVDSLEYGEEEAKKLTMNAAREFNTTVAVTGAVDYVSDGRRTFAVYNGHELLGRVTGTGCMVAALTGAFVAVTEPLKATTSALVTFGIAAEKAYEEAKYPGSFHVKLYDWLYRINENVIRTYAKVREVEL.

Met-43 provides a ligand contact to substrate. Lys-118 and Thr-165 together coordinate ATP. Gly-192 lines the substrate pocket.

It belongs to the Thz kinase family. The cofactor is Mg(2+).

The catalysed reaction is 5-(2-hydroxyethyl)-4-methylthiazole + ATP = 4-methyl-5-(2-phosphooxyethyl)-thiazole + ADP + H(+). The protein operates within cofactor biosynthesis; thiamine diphosphate biosynthesis; 4-methyl-5-(2-phosphoethyl)-thiazole from 5-(2-hydroxyethyl)-4-methylthiazole: step 1/1. In terms of biological role, catalyzes the phosphorylation of the hydroxyl group of 4-methyl-5-beta-hydroxyethylthiazole (THZ). The polypeptide is Hydroxyethylthiazole kinase (Pyrococcus horikoshii (strain ATCC 700860 / DSM 12428 / JCM 9974 / NBRC 100139 / OT-3)).